A 215-amino-acid polypeptide reads, in one-letter code: Protein Syd (215 aa).

The protein belongs to the Syd family.

It is found in the cell inner membrane. In terms of biological role, interacts with the SecY protein in vivo. May bind preferentially to an uncomplexed state of SecY, thus functioning either as a chelating agent for excess SecY in the cell or as a regulatory factor that negatively controls the translocase function. This is Protein Syd from Shewanella amazonensis (strain ATCC BAA-1098 / SB2B).